A 554-amino-acid polypeptide reads, in one-letter code: Sesquiterpene synthase 14a (554 aa).

Mg(2+) is bound by residues Asp-305, Asp-309, Asp-449, and Glu-457. Residues 305 to 309 (DDLYD) carry the DDXXD motif motif.

Belongs to the terpene synthase family. Tpsa subfamily. Mg(2+) is required as a cofactor. It depends on Mn(2+) as a cofactor. Mostly expressed in stem trichomes.

It carries out the reaction (2E,6E)-farnesyl diphosphate = beta-bisabolene + diphosphate. The catalysed reaction is (2E,6E)-farnesyl diphosphate = (Z)-alpha-bisabolene + diphosphate. The enzyme catalyses (2E,6E)-farnesyl diphosphate = beta-acoradiene + diphosphate. It catalyses the reaction (2E,6E)-farnesyl diphosphate = (E)-gamma-bisabolene + diphosphate. It carries out the reaction (2E,6E)-farnesyl diphosphate = (E)-beta-farnesene + diphosphate. The catalysed reaction is (2E,6E)-farnesyl diphosphate = (Z)-beta-farnesene + diphosphate. The enzyme catalyses (2E)-geranyl diphosphate = limonene + diphosphate. It catalyses the reaction (2E)-geranyl diphosphate = beta-myrcene + diphosphate. It functions in the pathway secondary metabolite biosynthesis; terpenoid biosynthesis. Sesquiterpene synthase involved in the biosynthesis of volatile compounds. Mediates the conversion of (2E,6E)-farnesyl diphosphate ((EE)-FPP) into beta-bisabolene, beta-farnesene, (E)-gamma-bisabolene, beta-acoradiene, selinene and (Z)-alpha-bisabolene. Low or no activity with (2Z,6Z)-farnesyl diphosphate ((ZZ)-FPP). Can act with a low efficiency as a monoterpene synthase with geranyl diphosphate (GPP) as substrate, thus producing beta-myrcene and limonene. The protein is Sesquiterpene synthase 14a of Solanum habrochaites (Wild tomato).